The chain runs to 292 residues: Homoserine kinase (292 aa).

81–91 (RPRSGLGSSGA) serves as a coordination point for ATP.

Belongs to the GHMP kinase family. Homoserine kinase subfamily.

The protein resides in the cytoplasm. It carries out the reaction L-homoserine + ATP = O-phospho-L-homoserine + ADP + H(+). Its pathway is amino-acid biosynthesis; L-threonine biosynthesis; L-threonine from L-aspartate: step 4/5. Catalyzes the ATP-dependent phosphorylation of L-homoserine to L-homoserine phosphate. This is Homoserine kinase from Thermococcus kodakarensis (strain ATCC BAA-918 / JCM 12380 / KOD1) (Pyrococcus kodakaraensis (strain KOD1)).